The primary structure comprises 238 residues: 2-C-methyl-D-erythritol 4-phosphate cytidylyltransferase (238 aa).

Belongs to the IspD/TarI cytidylyltransferase family. IspD subfamily.

It carries out the reaction 2-C-methyl-D-erythritol 4-phosphate + CTP + H(+) = 4-CDP-2-C-methyl-D-erythritol + diphosphate. It participates in isoprenoid biosynthesis; isopentenyl diphosphate biosynthesis via DXP pathway; isopentenyl diphosphate from 1-deoxy-D-xylulose 5-phosphate: step 2/6. Its function is as follows. Catalyzes the formation of 4-diphosphocytidyl-2-C-methyl-D-erythritol from CTP and 2-C-methyl-D-erythritol 4-phosphate (MEP). The polypeptide is 2-C-methyl-D-erythritol 4-phosphate cytidylyltransferase (Leptospira interrogans serogroup Icterohaemorrhagiae serovar copenhageni (strain Fiocruz L1-130)).